Reading from the N-terminus, the 387-residue chain is Ferrochelatase (387 aa).

Fe cation is bound by residues His196 and Glu277.

This sequence belongs to the ferrochelatase family.

It is found in the cytoplasm. The enzyme catalyses heme b + 2 H(+) = protoporphyrin IX + Fe(2+). The protein operates within porphyrin-containing compound metabolism; protoheme biosynthesis; protoheme from protoporphyrin-IX: step 1/1. Its function is as follows. Catalyzes the ferrous insertion into protoporphyrin IX. The chain is Ferrochelatase from Synechococcus elongatus (strain ATCC 33912 / PCC 7942 / FACHB-805) (Anacystis nidulans R2).